The chain runs to 550 residues: Medium/long-chain-fatty-acid--CoA/3-oxocholest-4-en-26-oate--CoA ligase (550 aa).

Residues 178 to 186 (TGGTTGFPK), aspartate 419, arginine 434, and lysine 525 contribute to the ATP site. A disordered region spans residues 525–550 (KPDYRWAKEQTEARPADDVHAAHVSA).

It belongs to the ATP-dependent AMP-binding enzyme family.

The enzyme catalyses a medium-chain fatty acid + ATP + CoA = a medium-chain fatty acyl-CoA + AMP + diphosphate. It carries out the reaction a long-chain fatty acid + ATP + CoA = a long-chain fatty acyl-CoA + AMP + diphosphate. It catalyses the reaction (25S)-3-oxocholest-4-en-26-oate + ATP + CoA = (25S)-3-oxocholest-4-en-26-oyl-CoA + AMP + diphosphate. The protein operates within lipid metabolism; fatty acid biosynthesis. It participates in steroid metabolism; cholesterol metabolism. In terms of biological role, catalyzes the activation of medium/long-chain fatty acids as acyl-coenzyme A (acyl-CoA), which are then transferred to the multifunctional polyketide synthase (PKS) type III for further chain extension. Also involved in the degradation of cholesterol via the degradation of the side chains of C-24 branched-chain sterols. Catalyzes the ATP-dependent CoA thioesterification of the sterol 3-oxocholest-4-en-26-oate to yield 3-oxocholest-4-en-26-oyl-CoA. The chain is Medium/long-chain-fatty-acid--CoA/3-oxocholest-4-en-26-oate--CoA ligase from Mycobacterium marinum (strain ATCC BAA-535 / M).